We begin with the raw amino-acid sequence, 299 residues long: GTPase Era (299 aa).

The Era-type G domain occupies 4–171 (KSGFVAILGR…VDILSENLDE (168 aa)). The tract at residues 12-19 (GRPNVGKS) is G1. GTP is bound at residue 12–19 (GRPNVGKS). The tract at residues 38-42 (QTTRN) is G2. A G3 region spans residues 59 to 62 (DTPG). Residues 59 to 63 (DTPGI) and 121 to 124 (NKID) each bind GTP. The tract at residues 121 to 124 (NKID) is G4. A G5 region spans residues 150-152 (ISA). Positions 202–280 (TREEIPHSVA…FLETWVKVKK (79 aa)) constitute a KH type-2 domain.

It belongs to the TRAFAC class TrmE-Era-EngA-EngB-Septin-like GTPase superfamily. Era GTPase family. Monomer.

It localises to the cytoplasm. Its subcellular location is the cell membrane. Functionally, an essential GTPase that binds both GDP and GTP, with rapid nucleotide exchange. Plays a role in 16S rRNA processing and 30S ribosomal subunit biogenesis and possibly also in cell cycle regulation and energy metabolism. The protein is GTPase Era of Streptococcus pneumoniae (strain P1031).